The sequence spans 214 residues: Histidine biosynthesis bifunctional protein HisIE (214 aa).

A phosphoribosyl-AMP cyclohydrolase region spans residues 1–125 (MPATALSLPL…ESIEPPPADT (125 aa)). Positions 126 to 214 (LSQVYNIVCQ…VYEQLQLRRR (89 aa)) are phosphoribosyl-ATP pyrophosphohydrolase.

In the N-terminal section; belongs to the PRA-CH family. The protein in the C-terminal section; belongs to the PRA-PH family.

Its subcellular location is the cytoplasm. It catalyses the reaction 1-(5-phospho-beta-D-ribosyl)-ATP + H2O = 1-(5-phospho-beta-D-ribosyl)-5'-AMP + diphosphate + H(+). The enzyme catalyses 1-(5-phospho-beta-D-ribosyl)-5'-AMP + H2O = 1-(5-phospho-beta-D-ribosyl)-5-[(5-phospho-beta-D-ribosylamino)methylideneamino]imidazole-4-carboxamide. Its pathway is amino-acid biosynthesis; L-histidine biosynthesis; L-histidine from 5-phospho-alpha-D-ribose 1-diphosphate: step 2/9. It participates in amino-acid biosynthesis; L-histidine biosynthesis; L-histidine from 5-phospho-alpha-D-ribose 1-diphosphate: step 3/9. The chain is Histidine biosynthesis bifunctional protein HisIE from Thermosynechococcus vestitus (strain NIES-2133 / IAM M-273 / BP-1).